A 272-amino-acid chain; its full sequence is Elongation factor Ts (272 aa).

Residues 76–79 form an involved in Mg(2+) ion dislocation from EF-Tu region; that stretch reads TDFV.

This sequence belongs to the EF-Ts family.

It is found in the cytoplasm. Functionally, associates with the EF-Tu.GDP complex and induces the exchange of GDP to GTP. It remains bound to the aminoacyl-tRNA.EF-Tu.GTP complex up to the GTP hydrolysis stage on the ribosome. The sequence is that of Elongation factor Ts from Corynebacterium jeikeium (strain K411).